The sequence spans 499 residues: U4/U6 small nuclear ribonucleoprotein Prp31 (499 aa).

The segment at 1–43 is disordered; the sequence is MSLADELLADLEEAAEEEEGGSYGEEEEEPAIEDVQEETQLDL. The segment covering 7–40 has biased composition (acidic residues); sequence LLADLEEAAEEEEGGSYGEEEEEPAIEDVQEETQ. Coiled coils occupy residues 85 to 120 and 181 to 215; these read EAAP…KYSK and DEEL…MSFI. The region spanning 215-333 is the Nop domain; it reads IAPNLSIIIG…IERKFDKWQE (119 aa). Positions 334-357 are disordered; the sequence is PPPVKQVKPLPAPLDGQRKKRGGR. The Nuclear localization signal (NLS) motif lies at 351–364; sequence RKKRGGRRYRKMKE. A phosphoserine mark is found at serine 379, serine 395, and serine 432. N6-acetyllysine is present on lysine 438. Serine 439 is modified (phosphoserine). The residue at position 440 (threonine 440) is a Phosphothreonine. The residue at position 450 (serine 450) is a Phosphoserine. At threonine 455 the chain carries Phosphothreonine. Residues lysine 471 and lysine 478 each participate in a glycyl lysine isopeptide (Lys-Gly) (interchain with G-Cter in SUMO2) cross-link.

This sequence belongs to the PRP31 family. Identified in the spliceosome B complex. Component of the U4/U6-U5 tri-snRNP complex composed of the U4, U6 and U5 snRNAs and at least PRPF3, PRPF4, PRPF6, PRPF8, PRPF31, SNRNP200, TXNL4A, SNRNP40, DDX23, CD2BP2, PPIH, SNU13, EFTUD2, SART1 and USP39. Interacts with a complex formed by SNU13 and U4 snRNA, but not with SNU13 or U4 snRNA alone. The complex formed by SNU13 and PRPF31 also binds U4atac snRNA, a characteristic component of specific, less abundant spliceosomal complexes. Interacts with PRPF6/U5 snRNP-associated 102 kDa protein. Component of some MLL1/MLL complex, at least composed of the core components KMT2A/MLL1, ASH2L, HCFC1/HCF1, WDR5 and RBBP5, as well as the facultative components BACC1, CHD8, E2F6, HSP70, INO80C, KANSL1, LAS1L, MAX, MCRS1, MGA, KAT8/MOF, PELP1, PHF20, PRP31, RING2, RUVB1/TIP49A, RUVB2/TIP49B, SENP3, TAF1, TAF4, TAF6, TAF7, TAF9 and TEX10. Interacts (via its NLS) with CTNNBL1. Interacts with USH1G. Phosphorylated by PRP4K during spliceosome assembly.

Its subcellular location is the nucleus. It localises to the nucleus speckle. The protein resides in the cajal body. Functionally, involved in pre-mRNA splicing as component of the spliceosome. Required for the assembly of the U4/U5/U6 tri-snRNP complex, one of the building blocks of the spliceosome. In Mus musculus (Mouse), this protein is U4/U6 small nuclear ribonucleoprotein Prp31 (Prpf31).